We begin with the raw amino-acid sequence, 271 residues long: Phospholipid scramblase family member 5 (271 aa).

Over residues 1 to 10 the composition is skewed to polar residues; it reads MASKDAQNQR. The tract at residues 1 to 33 is disordered; the sequence is MASKDAQNQRRGLPGFLPGAPDPDQSLPASSNP. The proline-rich domain (PRD) stretch occupies residues 1–45; that stretch reads MASKDAQNQRRGLPGFLPGAPDPDQSLPASSNPGNQAWQLSLPLP.

This sequence belongs to the phospholipid scramblase family.

In Homo sapiens (Human), this protein is Phospholipid scramblase family member 5 (PLSCR5).